Consider the following 683-residue polypeptide: MALSKRELDELKPWIEKTVKRVLGFSEPTVVTAALNCVGKGMDKKKAADHLKPFLDDSTLRFVDKLFEAVEEGRSSRHSKSSSDRSRKRELKEVFGDDSEISKESSGVKKRRIPRFEEVEEEPEVIPGPPSESPGMLTKLQIKQMMEAATRQIEERKKQLSFISPPAPQPKTPSSSQPERLPIGNTIQPSQAATFMNDAIEKARKAAELQARIQAQLALKPGLIGNANMVGLANLHAMGIAPPKVELKDQTKPTPLILDEQGRTVDATGKEVELTHRMPTLKANIRAVKREQFKQQLKEKPSEDMESNTFFDPRVSIAPSQRQRRTFKFHDKGKFEKIAQRLRTKAQLEKLQAEISQAARKTGIHTSTRLALIAPKKELKEGDIPEIEWWDSYIIPNGFDLTEENPKREDYFGITNLVEHPAQLNPPVDNDTPVTLGVYLTKKEQKKLRRQTRREAQKELQEKVRLGLTPPPEPKVRISNLMRVLGTEAVQDPTKVEAHVRAQMAKRQKAHEEANAARKLTAEQRKVKKIKKLKEDISQGVHISVYRVRNLSNPAKKFKIEANAGQLYLTGVVVLHKDVNVVVVEGGPKAQKKFKRLMLHRIKWDEQTSNTKGDDDEESDEEAVKKTNKCVLVWEGTAKDRSFGEMKFKQCPTENMAREHFKKHGAEHYWDLALSESVLESTD.

The 87-residue stretch at 1–87 (MALSKRELDE…HSKSSSDRSR (87 aa)) folds into the PWI domain. A compositionally biased stretch (basic and acidic residues) spans 73–107 (GRSSRHSKSSSDRSRKRELKEVFGDDSEISKESSG). The interval 73–135 (GRSSRHSKSS…IPGPPSESPG (63 aa)) is disordered. Lysine 139 is covalently cross-linked (Glycyl lysine isopeptide (Lys-Gly) (interchain with G-Cter in SUMO2)). Residues 161–183 (SFISPPAPQPKTPSSSQPERLPI) are disordered. At serine 164 the chain carries Phosphoserine. Glycyl lysine isopeptide (Lys-Gly) (interchain with G-Cter in SUMO2) cross-links involve residues lysine 244 and lysine 252. Positions 416–550 (NLVEHPAQLN…VHISVYRVRN (135 aa)) are mediates interaction with SART3. Serine 619 carries the phosphoserine modification.

In terms of assembly, component of the precatalytic spliceosome (spliceosome B complex). Component of the U4/U6-U5 tri-snRNP complex, a building block of the precatalytic spliceosome (spliceosome B complex). The U4/U6-U5 tri-snRNP complex is composed of the U4, U6 and U5 snRNAs and at least PRPF3, PRPF4, PRPF6, PRPF8, PRPF31, SNRNP200, TXNL4A, SNRNP40, SNRPB, SNRPD1, SNRPD2, SNRPD3, SNRPE, SNRPF, SNRPG, DDX23, CD2BP2, PPIH, SNU13, EFTUD2, SART1 and USP39, plus LSM2, LSM3, LSM4, LSM5, LSM6, LSM7 and LSM8. Interacts directly with PRPF4. Part of a heteromeric complex containing PPIH, PRPF3 and PRPF4 that is stable in the absence of RNA. Interacts with SART3; the interaction is direct and recruits the deubiquitinase USP4 to PRPF3. Interacts with PRPF19. Interacts ('Lys-63'-linked polyubiquitinated) with PRPF8 (via the MPN (JAB/Mov34) domain); may stabilize the U4/U6-U5 tri-snRNP complex. Interacts with ERCC6. In terms of processing, ubiquitinated. Undergoes 'Lys-63'-linked polyubiquitination by PRPF19 and deubiquitination by USP4. 'Lys-63'-linked ubiquitination increases the affinity for PRPF8 and may regulate the assembly of the U4/U6-U5 tri-snRNP complex.

Its subcellular location is the nucleus. The protein localises to the nucleus speckle. Plays a role in pre-mRNA splicing as component of the U4/U6-U5 tri-snRNP complex that is involved in spliceosome assembly, and as component of the precatalytic spliceosome (spliceosome B complex). The sequence is that of U4/U6 small nuclear ribonucleoprotein Prp3 (Prpf3) from Mus musculus (Mouse).